The primary structure comprises 418 residues: cAMP-dependent protein kinase type II-beta regulatory subunit (418 aa).

The segment at 2–153 (SIEIPAGLTE…RLQEACKDIL (152 aa)) is dimerization and phosphorylation. Positions 48–57 (TARFGHEGRT) are enriched in basic and acidic residues. The disordered stretch occupies residues 48–96 (TARFGHEGRTWGDLGAAAGGGTPSKGVNFAEEPMQSDSEDGEEEEAAPA). Thr69 carries the phosphothreonine modification. Residues Ser83, Ser85, and Ser114 each carry the phosphoserine modification. Acidic residues predominate over residues 84–94 (DSEDGEEEEAA). 3',5'-cyclic AMP-binding positions include 154–275 (LFKN…ESLP), Glu223, Arg232, 276–418 (FLKS…EPTA), Glu352, and Arg361.

This sequence belongs to the cAMP-dependent kinase regulatory chain family. In terms of assembly, the inactive form of the enzyme is composed of two regulatory chains and two catalytic chains. Activation by cAMP produces two active catalytic monomers and a regulatory dimer that binds four cAMP molecules. Interacts with PRKACA and PRKACB. Interacts with the phosphorylated form of PJA2. Forms a complex composed of PRKAR2B, GSK3B and GSKIP through GSKIP interaction; facilitates PKA-induced phosphorylation and regulates GSK3B activity. Phosphorylated by the activated catalytic chain. In terms of tissue distribution, four types of regulatory chains are found: I-alpha, I-beta, II-alpha, and II-beta. Their expression varies among tissues and is in some cases constitutive and in others inducible.

It localises to the cytoplasm. Its subcellular location is the cell membrane. Regulatory subunit of the cAMP-dependent protein kinases involved in cAMP signaling in cells. Type II regulatory chains mediate membrane association by binding to anchoring proteins, including the MAP2 kinase. This is cAMP-dependent protein kinase type II-beta regulatory subunit (PRKAR2B) from Homo sapiens (Human).